The primary structure comprises 271 residues: Putative F-box protein L165 (271 aa).

The region spanning 4–49 is the F-box domain; sequence ICELFDDVILEIMNLLSDTDKINFMFCCSRFYYFIDLVYYNDIYDY. The tract at residues 251–271 is disordered; sequence NIPKIVPKNTHYRNSSKKYRY. The segment covering 260-271 has biased composition (basic residues); the sequence is THYRNSSKKYRY.

The chain is Putative F-box protein L165 from Acanthamoeba polyphaga mimivirus (APMV).